Consider the following 211-residue polypeptide: Large ribosomal subunit protein eL13 (211 aa).

N6-acetyllysine is present on Lys16. Phosphoserine is present on residues Ser52, Ser77, and Ser106. Glycyl lysine isopeptide (Lys-Gly) (interchain with G-Cter in SUMO2) cross-links involve residues Lys123 and Lys145. Lys174 participates in a covalent cross-link: Glycyl lysine isopeptide (Lys-Gly) (interchain with G-Cter in SUMO1); alternate. Residues Lys174 and Lys177 each participate in a glycyl lysine isopeptide (Lys-Gly) (interchain with G-Cter in SUMO2); alternate cross-link. Position 177 is an N6-acetyllysine; alternate (Lys177).

Belongs to the eukaryotic ribosomal protein eL13 family. As to quaternary structure, component of the 60S large ribosomal subunit (LSU).

It localises to the cytoplasm. Its function is as follows. Component of the ribosome, a large ribonucleoprotein complex responsible for the synthesis of proteins in the cell. The small ribosomal subunit (SSU) binds messenger RNAs (mRNAs) and translates the encoded message by selecting cognate aminoacyl-transfer RNA (tRNA) molecules. The large subunit (LSU) contains the ribosomal catalytic site termed the peptidyl transferase center (PTC), which catalyzes the formation of peptide bonds, thereby polymerizing the amino acids delivered by tRNAs into a polypeptide chain. The nascent polypeptides leave the ribosome through a tunnel in the LSU and interact with protein factors that function in enzymatic processing, targeting, and the membrane insertion of nascent chains at the exit of the ribosomal tunnel. As part of the LSU, it is probably required for its formation and the maturation of rRNAs. Plays a role in bone development. This is Large ribosomal subunit protein eL13 (Rpl13) from Rattus norvegicus (Rat).